The following is a 470-amino-acid chain: Probable E3 ubiquitin-protein ligase TRIML1 (470 aa).

An RING-type zinc finger spans residues 22-63 (CFICLDYFSSPVTTECGHSFCLMCLLKSWEEHNTPLSCPECW). Coiled coils occupy residues 135–170 (SEAE…KERV) and 196–235 (KEEE…GKMI). Residues 273 to 470 (TELSLCHITG…NTDPLIICHI (198 aa)) enclose the B30.2/SPRY domain.

In terms of assembly, interacts with USP5. In terms of tissue distribution, testis.

It carries out the reaction S-ubiquitinyl-[E2 ubiquitin-conjugating enzyme]-L-cysteine + [acceptor protein]-L-lysine = [E2 ubiquitin-conjugating enzyme]-L-cysteine + N(6)-ubiquitinyl-[acceptor protein]-L-lysine.. Its pathway is protein modification; protein ubiquitination. Its function is as follows. Probable E3 ubiquitin-protein ligase which plays an important role in blastocyst development. Involved in progression of blastocyst stage and subsequent embryo development. The polypeptide is Probable E3 ubiquitin-protein ligase TRIML1 (Triml1) (Mus musculus (Mouse)).